Consider the following 781-residue polypeptide: Penicillin-binding protein 1B (781 aa).

The segment at Phe-151–Gln-322 is transglycosylase. The active-site Proton donor; for transglycosylase activity is the Glu-188. The transpeptidase stretch occupies residues Ser-415–Asn-702. Ser-466 serves as the catalytic Acyl-ester intermediate; for transpeptidase activity. The segment covering Glu-749 to Ser-768 has biased composition (low complexity). The tract at residues Glu-749–Gln-781 is disordered.

It in the N-terminal section; belongs to the glycosyltransferase 51 family. In the C-terminal section; belongs to the transpeptidase family.

Its subcellular location is the cell inner membrane. The catalysed reaction is [GlcNAc-(1-&gt;4)-Mur2Ac(oyl-L-Ala-gamma-D-Glu-L-Lys-D-Ala-D-Ala)](n)-di-trans,octa-cis-undecaprenyl diphosphate + beta-D-GlcNAc-(1-&gt;4)-Mur2Ac(oyl-L-Ala-gamma-D-Glu-L-Lys-D-Ala-D-Ala)-di-trans,octa-cis-undecaprenyl diphosphate = [GlcNAc-(1-&gt;4)-Mur2Ac(oyl-L-Ala-gamma-D-Glu-L-Lys-D-Ala-D-Ala)](n+1)-di-trans,octa-cis-undecaprenyl diphosphate + di-trans,octa-cis-undecaprenyl diphosphate + H(+). It catalyses the reaction Preferential cleavage: (Ac)2-L-Lys-D-Ala-|-D-Ala. Also transpeptidation of peptidyl-alanyl moieties that are N-acyl substituents of D-alanine.. Its pathway is cell wall biogenesis; peptidoglycan biosynthesis. Cell wall formation. Synthesis of cross-linked peptidoglycan from the lipid intermediates. The enzyme has a penicillin-insensitive transglycosylase N-terminal domain (formation of linear glycan strands) and a penicillin-sensitive transpeptidase C-terminal domain (cross-linking of the peptide subunits). This is Penicillin-binding protein 1B (mrcB) from Haemophilus influenzae (strain ATCC 51907 / DSM 11121 / KW20 / Rd).